A 483-amino-acid chain; its full sequence is Glycogen synthase (483 aa).

Lys-18 lines the ADP-alpha-D-glucose pocket.

This sequence belongs to the glycosyltransferase 1 family. Bacterial/plant glycogen synthase subfamily.

It carries out the reaction [(1-&gt;4)-alpha-D-glucosyl](n) + ADP-alpha-D-glucose = [(1-&gt;4)-alpha-D-glucosyl](n+1) + ADP + H(+). It functions in the pathway glycan biosynthesis; glycogen biosynthesis. Functionally, synthesizes alpha-1,4-glucan chains using ADP-glucose. The polypeptide is Glycogen synthase (Rhodopseudomonas palustris (strain ATCC BAA-98 / CGA009)).